The sequence spans 211 residues: Claudin-7 (211 aa).

The Cytoplasmic portion of the chain corresponds to 1-7; the sequence is MANSGLQ. Residues 8 to 28 form a helical membrane-spanning segment; the sequence is LLGFSMALLGWVGLVACTAIP. Residues 29 to 81 are Extracellular-facing; sequence QWQMSSYAGDNIITAQAMYKGLWMDCVTQSTGMMSCKMYDSVLALSAALQATR. A helical transmembrane segment spans residues 82-102; the sequence is ALMVVSLVLGFLAMFVATMGM. The Cytoplasmic portion of the chain corresponds to 103–117; the sequence is KCTRCGGDDKVKKAR. A helical membrane pass occupies residues 118-138; that stretch reads IAMGGGIIFIVAGLAALVACS. The Extracellular segment spans residues 139-160; the sequence is WYGHQIVTDFYNPLIPTNIKYE. A helical membrane pass occupies residues 161 to 181; it reads FGPAIFIGWAGSALVILGGAL. At 182 to 211 the chain is on the cytoplasmic side; it reads LSCSCPGNESKAGYRVPRSYPKSNSSKEYV. The interactions with TJP1, TJP2 and TJP3 stretch occupies residues 210 to 211; sequence YV.

The protein belongs to the claudin family. Directly interacts with TJP1/ZO-1, TJP2/ZO-2 and TJP3/ZO-3. The phosphorylated form interacts with EPCAM. Does not interact with CD81. Phosphorylated. As to expression, expressed in kidney, lung and prostate. Isoform 1 seems to be predominant, except in some normal prostate samples, where isoform 2 is the major form. Down-regulated in breast cancers, including ductal carcinoma in situ (DCIS), lobular carcinoma in situ (LCIS) and invasive ductal carcinoma (IDC) (at protein level), as well as in several cancer cell lines. Loss of expression correlates with histological grade, occurring predominantly in high-grade lesions.

The protein resides in the cell membrane. It localises to the basolateral cell membrane. It is found in the cell junction. Its subcellular location is the tight junction. Its function is as follows. Plays a major role in tight junction-specific obliteration of the intercellular space. This Homo sapiens (Human) protein is Claudin-7 (CLDN7).